The sequence spans 209 residues: 60S ribosomal subunit assembly/export protein loc-1 (209 aa).

Disordered regions lie at residues 1 to 53 (MAPT…SKGR) and 135 to 209 (REAR…AAPE). Composition is skewed to basic and acidic residues over residues 20–33 (GSKD…DGVL) and 135–159 (REAR…TKDS). Residues 126-170 (IKARQMEEIREARRAEAEKKEAERKARLEETKDSLRKKRKRSKQS) are a coiled coil.

The protein belongs to the LOC1 family. Component of the 66S pre-ribosomal particle.

The protein localises to the nucleus. The protein resides in the nucleolus. Required for efficient assembly and nuclear export of the 60S ribosomal subunit. The protein is 60S ribosomal subunit assembly/export protein loc-1 (loc-1) of Neurospora crassa (strain ATCC 24698 / 74-OR23-1A / CBS 708.71 / DSM 1257 / FGSC 987).